The following is a 168-amino-acid chain: Glycine-rich RNA-binding protein 2 (168 aa).

The 79-residue stretch at 8–86 (YRCFVGGLAW…RNITVNQAQS (79 aa)) folds into the RRM domain. The disordered stretch occupies residues 148 to 168 (GYGGGGGYGGNRGDSGGNWRN).

Functionally, possibly has a role in RNA transcription or processing during stress. The chain is Glycine-rich RNA-binding protein 2 (GRP2) from Sorghum bicolor (Sorghum).